The primary structure comprises 550 residues: Membrane protein insertase YidC (550 aa).

A helical transmembrane segment spans residues 3-23 (IKRTVLWVIFFMSAVMLFDNW). Residues 34–73 (FPSATQTKTAAPAAPGSSTTASQPTDLPQTTAAAPGSTTP) are disordered. Residues 35–73 (PSATQTKTAAPAAPGSSTTASQPTDLPQTTAAAPGSTTP) are compositionally biased toward low complexity. 4 helical membrane passes run 363 to 383 (WGWAIVLLTLLIKAVFFPLSA), 429 to 449 (FGGCLPVVIQIPVFISLYWVL), 472 to 492 (PYFILPVLMAVSMFVQTKLNP), and 503 to 523 (MMFMPIAFSVMFFFFPAGLVL).

It belongs to the OXA1/ALB3/YidC family. Type 1 subfamily. Interacts with the Sec translocase complex via SecD. Specifically interacts with transmembrane segments of nascent integral membrane proteins during membrane integration.

The protein resides in the cell inner membrane. In terms of biological role, required for the insertion and/or proper folding and/or complex formation of integral membrane proteins into the membrane. Involved in integration of membrane proteins that insert both dependently and independently of the Sec translocase complex, as well as at least some lipoproteins. Aids folding of multispanning membrane proteins. The chain is Membrane protein insertase YidC from Paraburkholderia phymatum (strain DSM 17167 / CIP 108236 / LMG 21445 / STM815) (Burkholderia phymatum).